The chain runs to 281 residues: L-cysteine S-thiosulfotransferase subunit SoxA (281 aa).

The N-terminal stretch at 1–25 (MTKHGFLLATLVLAGATLPIGPVTA) is a signal peptide. A disulfide bond links Cys-99 and Cys-130. The 107-residue stretch at 175-281 (AAYEQGKRFY…LELNGPGARK (107 aa)) folds into the Cytochrome c domain. The heme site is built by Cys-195 and His-199. Arg-238 is a substrate binding site. Cys-242 contributes to the heme binding site. Cys-242 acts as the Cysteine persulfide intermediate in catalysis.

This sequence belongs to the SoxA family. Heterodimer of SoxA and SoxX. It depends on heme as a cofactor. Cysteine persulfide at Cys-242.

Its subcellular location is the periplasm. It carries out the reaction L-cysteinyl-[SoxY protein] + thiosulfate + 2 Fe(III)-[cytochrome c] = S-sulfosulfanyl-L-cysteinyl-[SoxY protein] + 2 Fe(II)-[cytochrome c] + 2 H(+). The enzyme catalyses S-sulfanyl-L-cysteinyl-[SoxY protein] + thiosulfate + 2 Fe(III)-[cytochrome c] = S-(2-sulfodisulfanyl)-L-cysteinyl-[SoxY protein] + 2 Fe(II)-[cytochrome c] + 2 H(+). Its function is as follows. C-type monoheme cytochrome, which is part of the SoxAX cytochrome complex involved in sulfur oxidation. The SoxAX complex catalyzes the formation of a heterodisulfide bond between the conserved cysteine residue on a sulfur carrier SoxYZ complex subunit SoxY and thiosulfate or other inorganic sulfur substrates. This leads to the intermediary formation of conspicuous sulfur globules inside of the cells. This chain is L-cysteine S-thiosulfotransferase subunit SoxA, found in Allochromatium vinosum (Chromatium vinosum).